The following is a 413-amino-acid chain: ORC1-type DNA replication protein 2 (413 aa).

ATP contacts are provided by residues 70 to 74 (TGKTA), Tyr217, and Arg229.

Belongs to the CDC6/cdc18 family. In terms of assembly, monomer. Interacts with Cdc6-3, MCM and PolB1. Post-translationally, autophosphorylated in vitro.

In terms of biological role, involved in regulation of DNA replication. May play essential roles in origin recognition and cell cycle control of replication. Binds both single-stranded and double-stranded DNA, with a preference for molecules that contain a bubble, a fork, or a tail. Has a weak ATPase activity. Stimulates the binding of the MCM helicase to the origin DNA, but strongly inhibits ATPase and DNA helicase activities of MCM. Also regulates the DNA polymerase and the nuclease activities of PolB1. The sequence is that of ORC1-type DNA replication protein 2 (cdc6-2) from Saccharolobus solfataricus (strain ATCC 35092 / DSM 1617 / JCM 11322 / P2) (Sulfolobus solfataricus).